Consider the following 196-residue polypeptide: Holliday junction branch migration complex subunit RuvA (196 aa).

The domain I stretch occupies residues Met-1–Leu-63. Residues Asn-64–Ser-139 are domain II. Position 139 (Ser-139) is a region of interest, flexible linker. The segment at Ser-139 to Asn-196 is domain III.

This sequence belongs to the RuvA family. As to quaternary structure, homotetramer. Forms an RuvA(8)-RuvB(12)-Holliday junction (HJ) complex. HJ DNA is sandwiched between 2 RuvA tetramers; dsDNA enters through RuvA and exits via RuvB. An RuvB hexamer assembles on each DNA strand where it exits the tetramer. Each RuvB hexamer is contacted by two RuvA subunits (via domain III) on 2 adjacent RuvB subunits; this complex drives branch migration. In the full resolvosome a probable DNA-RuvA(4)-RuvB(12)-RuvC(2) complex forms which resolves the HJ.

The protein resides in the cytoplasm. Functionally, the RuvA-RuvB-RuvC complex processes Holliday junction (HJ) DNA during genetic recombination and DNA repair, while the RuvA-RuvB complex plays an important role in the rescue of blocked DNA replication forks via replication fork reversal (RFR). RuvA specifically binds to HJ cruciform DNA, conferring on it an open structure. The RuvB hexamer acts as an ATP-dependent pump, pulling dsDNA into and through the RuvAB complex. HJ branch migration allows RuvC to scan DNA until it finds its consensus sequence, where it cleaves and resolves the cruciform DNA. The sequence is that of Holliday junction branch migration complex subunit RuvA from Borreliella afzelii (strain PKo) (Borrelia afzelii).